The sequence spans 237 residues: Transcriptional regulatory protein YvrH (237 aa).

Positions 5 to 119 constitute a Response regulatory domain; sequence SILIVDDEKA…ELAARIRAHL (115 aa). Position 55 is a 4-aspartylphosphate (Asp-55). The ompR/PhoB-type DNA-binding region spans 131–230; sequence NQTYTYDYFT…VRGLGYRFIP (100 aa).

Post-translationally, phosphorylated by YvrG.

The protein resides in the cytoplasm. Its function is as follows. Member of the two-component regulatory system YvrG/YvrH that positively regulates 7 transcriptional units (wprA, wapA-yxxG, dltABCDE, sunA, sunT-bdbA-yolJ-bdbB, sigO-rsoA, and sigX-rsiX), and negatively regulates the lytABC operon. In Bacillus subtilis (strain 168), this protein is Transcriptional regulatory protein YvrH (yvrH).